A 298-amino-acid chain; its full sequence is Thymidylate synthase (298 aa).

DUMP contacts are provided by residues Arg25 and 159-160; that span reads RR. The active-site Nucleophile is Cys179. DUMP is bound by residues 200–203, Asn211, and 241–243; these read RSVD and HLY. Asp203 provides a ligand contact to (6R)-5,10-methylene-5,6,7,8-tetrahydrofolate. Residue Ala297 participates in (6R)-5,10-methylene-5,6,7,8-tetrahydrofolate binding.

The protein belongs to the thymidylate synthase family. Bacterial-type ThyA subfamily. As to quaternary structure, homodimer.

It is found in the cytoplasm. The enzyme catalyses dUMP + (6R)-5,10-methylene-5,6,7,8-tetrahydrofolate = 7,8-dihydrofolate + dTMP. Its pathway is pyrimidine metabolism; dTTP biosynthesis. Functionally, catalyzes the reductive methylation of 2'-deoxyuridine-5'-monophosphate (dUMP) to 2'-deoxythymidine-5'-monophosphate (dTMP) while utilizing 5,10-methylenetetrahydrofolate (mTHF) as the methyl donor and reductant in the reaction, yielding dihydrofolate (DHF) as a by-product. This enzymatic reaction provides an intracellular de novo source of dTMP, an essential precursor for DNA biosynthesis. The protein is Thymidylate synthase of Cereibacter sphaeroides (strain ATCC 17025 / ATH 2.4.3) (Rhodobacter sphaeroides).